We begin with the raw amino-acid sequence, 123 residues long: uncharacterized protein (123 aa).

The tract at residues 89–123 is disordered; the sequence is GVGGRKLGSEGQSLSENSEQRSLMRWGCGGSSERR. Over residues 98–109 the composition is skewed to polar residues; it reads EGQSLSENSEQR.

This is an uncharacterized protein from Encephalitozoon cuniculi (strain GB-M1) (Microsporidian parasite).